The sequence spans 129 residues: Putative CC-type chemokine FPV061 (129 aa).

It belongs to the intercrine beta (chemokine CC) family. Highly divergent.

This chain is Putative CC-type chemokine FPV061, found in Fowlpox virus (strain NVSL) (FPV).